The following is a 162-amino-acid chain: Troponin C, skeletal muscle (162 aa).

A1 carries the post-translational modification N-acetylalanine. 4 EF-hand domains span residues 17 to 52, 53 to 88, 93 to 128, and 129 to 162; these read EMIA…LGQT, PTKE…QMKE, KSEE…SGES, and ITDE…EGVQ. D30, D32, D36, E41, D66, D68, S70, T72, E77, D106, N108, D110, Y112, E117, D142, N144, D146, K148, and E153 together coordinate Ca(2+).

This sequence belongs to the troponin C family.

Troponin is the central regulatory protein of striated muscle contraction. Tn consists of three components: Tn-I which is the inhibitor of actomyosin ATPase, Tn-T which contains the binding site for tropomyosin and Tn-C. The binding of calcium to Tn-C abolishes the inhibitory action of Tn on actin filaments. In Pelophylax lessonae (Pool frog), this protein is Troponin C, skeletal muscle.